Reading from the N-terminus, the 115-residue chain is MTTSSYFLLMALGLLLYVCQSSFGNQHTRTFDTPKHRCGSEITNSYMDLCYRKRNDAGEKRGRASPLWQRRGSLSKLKARAKRNGAFHLPRDGRGVVEHCCHRPCSNAEFKKYCG.

Residues 1-24 form the signal peptide; the sequence is MTTSSYFLLMALGLLLYVCQSSFG. Positions 25–29 are excised as a propeptide; the sequence is NQHTR. At proline 34 the chain carries 4-hydroxyproline; partial. Intrachain disulfides connect cysteine 38/cysteine 101, cysteine 50/cysteine 114, and cysteine 100/cysteine 105. A 4-carboxyglutamate modification is found at glutamate 41. Positions 53 to 94 are cleaved as a propeptide — c peptide; sequence KRNDAGEKRGRASPLWQRRGSLSKLKARAKRNGAFHLPRDGR. Glutamate 98 is subject to 4-carboxyglutamate. The residue at position 104 (proline 104) is a 4-hydroxyproline; partial. Glutamate 109 is modified (4-carboxyglutamate; partial). Cysteine 114 bears the Cysteine amide mark.

Belongs to the insulin family. Heterodimer of A and B chains; disulfide-linked. As to expression, expressed by the venom gland.

The protein resides in the secreted. In terms of biological role, this venom insulin, from a fish-hunting cone snail, facilitates prey capture by rapidly inducing hypoglycemic shock. It is one of the smallest known insulin found in nature and lacks the C-terminal segment of the B chain that, in human insulin, mediates engagement of the insulin receptor (INSR) and assembly of the hormone's hexameric storage form. Despite lacking this segment, it both binds and activates human insulin receptor (long isoform (HIR-B)) with a high potency (EC(50)=16.28 nM). In vivo, intraperitoneal injection of this peptide into zebrafish lowers blood glucose with the same potency than human insulin. In addition, when applied to water, this peptide reduces overall locomotor activity of zebrafish larvae, observed as a significant decrease in the percentage of time spent swimming and movement frequency. When tested on a mouse model of diabetes, this insulin also lowers blood glucose with a 10-fold lower potency than human insulin. This Conus geographus (Geography cone) protein is Con-Ins G1a.